Reading from the N-terminus, the 467-residue chain is Ammonium transporter Rh type C (467 aa).

Residues M1–W9 are Cytoplasmic-facing. The chain crosses the membrane as a helical span at residues R10 to V30. Residues R31 to Y61 lie on the Extracellular side of the membrane. A glycan (N-linked (GlcNAc...) asparagine) is linked at N48. A helical membrane pass occupies residues P62–L82. Residues Q83–G86 are Cytoplasmic-facing. The chain crosses the membrane as a helical span at residues Y87 to M107. Residues Q108–S131 are Extracellular-facing. Helical transmembrane passes span C132–M152 and L153–V173. Topologically, residues L174 to A179 are extracellular. The chain crosses the membrane as a helical span at residues G180–L200. Residues Y201–N219 lie on the Cytoplasmic side of the membrane. Residues L220–M240 traverse the membrane as a helical segment. At S241–A251 the chain is on the extracellular side. The helical transmembrane segment at I252 to L272 threads the bilayer. Residues H273–H282 lie on the Cytoplasmic side of the membrane. The chain crosses the membrane as a helical span at residues I283–M303. Position 304 (P304) is a topological domain, extracellular. The helical transmembrane segment at Y305–L325 threads the bilayer. Over T326–N343 the chain is Cytoplasmic. The helical transmembrane segment at L344–S364 threads the bilayer. The Extracellular portion of the chain corresponds to P365–A391. A helical transmembrane segment spans residues F392–L412. Over K413 to P467 the chain is Cytoplasmic. Over residues E436 to H447 the composition is skewed to basic and acidic residues. Residues E436–P467 are disordered. Over residues Q458 to P467 the composition is skewed to polar residues.

The protein belongs to the ammonium transporter (TC 2.A.49) family. Rh subfamily. In terms of assembly, homotrimer. Post-translationally, N-glycosylated.

It is found in the cell membrane. The protein localises to the apical cell membrane. The catalysed reaction is NH4(+)(in) = NH4(+)(out). The enzyme catalyses methylamine(out) = methylamine(in). It catalyses the reaction CO2(out) = CO2(in). Functionally, ammonium transporter involved in the maintenance of acid-base homeostasis. Transports ammonium and its related derivative methylammonium across the plasma membrane of epithelial cells likely contributing to renal transepithelial ammonia transport and ammonia metabolism. Postulated to primarily mediate an electroneutral bidirectional transport of NH3 ammonia species according to a mechanism that implies interaction of an NH4(+) ion with acidic residues of the pore entry followed by dissociation of NH4(+) into NH3 and H(+). As a result NH3 transits through the central pore and is protonated on the extracellular side reforming NH4(+). May act as a CO2 channel providing for renal acid secretion. The chain is Ammonium transporter Rh type C (RHCG) from Oryctolagus cuniculus (Rabbit).